The sequence spans 942 residues: MSDYKHTLNLPETPFPMRGNLAQREPKMLKAWYEDDLYGQIRSAKKGKKTFILHDGPPYANGDIHLGHSVNKILKDIIVKSKTLSDFDSPLVPGWDCHGLPIELMVEKKVGKPGVKVTASEFREKCRAYAKKQVEGQKVDFKRLGVFADWDKPYLTMNFDFEANAIRVLGRIIEKGHLHKGAKPVHWCTDCGSALAEAEVEYQDKQSPAIDVRFIFNDQDAVVSAFDLADGHKGTGKVGTVIWTTTPWTLPANRAVAVHAELEYALVQVEDEGKQQRLILGSELVKDAMDRFGFNQFHVLGYVKGAALENLQVAHPFYDFSVPVIVAEHVTTDSGTGVVHTAPGHGQEDFVAGLEYKLEVANPVGANGVYLPDTELFAGQHVFKANASIVEVLKEHGALMHHHAITHSYPHCWRHKTPIIFRATPQWFISMDQANLRQDSLNEIKNTQWLPEWGESRIANMVEGRPDWCISRQRTWGVPIALFADKDTGAIHPNTQELIEQAAQLVEKSGIQAWYDLDPATLLGEEDAKQYMKVQDTLDVWFDSGVSHACVVDAREDLTGPADLYLEGSDQHRGWFMSSMMTSVAINGHAPYRQVLTHGFTVDENGRKMSKSLGNVISPQNVMNKLGADILRLWVASTDYTAEMTVSDEIFNRSADRYRRIRNTSRYLLANLNGFDPKTDQVAVNDMVELDKWIVGRAAQLQTEILAAYDSYQMLLVTQKLMNFCTGELGSFYLDVIKDRQYTAKSDSHARRSCQTALYHIAEAMTRWMAPIMSFTAQEIWEALPGERSDYVFTSTWYEGLQAPTNSQFSNDDWLEILTVRDEVNRLLEAARKEEVIGATLQATVNLYTGKALAAKLLALGDELRFVFLTSAVNVTEVDSQPADTQTTEIDGLYISVAATDAQKCERCWHYSADVGVEPAHPEICGRCVSNVDGEGEQRQFA.

The short motif at 58-68 (PYANGDIHLGH) is the 'HIGH' region element. L-isoleucyl-5'-AMP is bound at residue E567. The short motif at 608–612 (KMSKS) is the 'KMSKS' region element. Residue K611 participates in ATP binding. Positions 905, 908, 925, and 928 each coordinate Zn(2+).

It belongs to the class-I aminoacyl-tRNA synthetase family. IleS type 1 subfamily. As to quaternary structure, monomer. Zn(2+) is required as a cofactor.

The protein resides in the cytoplasm. The enzyme catalyses tRNA(Ile) + L-isoleucine + ATP = L-isoleucyl-tRNA(Ile) + AMP + diphosphate. Catalyzes the attachment of isoleucine to tRNA(Ile). As IleRS can inadvertently accommodate and process structurally similar amino acids such as valine, to avoid such errors it has two additional distinct tRNA(Ile)-dependent editing activities. One activity is designated as 'pretransfer' editing and involves the hydrolysis of activated Val-AMP. The other activity is designated 'posttransfer' editing and involves deacylation of mischarged Val-tRNA(Ile). In Pseudoalteromonas translucida (strain TAC 125), this protein is Isoleucine--tRNA ligase.